The following is a 988-amino-acid chain: Ephrin type-B receptor 3 (988 aa).

The interval G1 to L24 is disordered. The Extracellular segment spans residues G1–L534. The region spanning G11–A189 is the Eph LBD domain. Residues C53 and C171 are joined by a disulfide bond. Fibronectin type-III domains are found at residues V311–A424 and A425–D522. N-linked (GlcNAc...) asparagine glycans are attached at residues N323 and N418. The chain crosses the membrane as a helical span at residues I535–V555. Topologically, residues C556 to V988 are cytoplasmic. Y604 carries the post-translational modification Phosphotyrosine; by autocatalysis. Residues V623–I886 enclose the Protein kinase domain. ATP contacts are provided by residues I629–V637 and K655. The Proton acceptor role is filled by D748. The region spanning T915 to Q979 is the SAM domain. The short motif at V986–V988 is the PDZ-binding element.

This sequence belongs to the protein kinase superfamily. Tyr protein kinase family. Ephrin receptor subfamily. In terms of assembly, heterotetramer upon binding of the ligand. The heterotetramer is composed of an ephrin dimer and a receptor dimer. Oligomerization is probably required to induce biological responses. In terms of processing, phosphorylated. Autophosphorylates upon ligand-binding. Autophosphorylation on Tyr-604 is required for interaction with SH2 domain-containing proteins. In terms of tissue distribution, present in 10-day embryonic brain and body tissues. Prominent expression in kidney. Lower expression in lung, and barely detectable in brain, liver, heart, skeletal muscle and thymus.

The protein resides in the cell membrane. Its subcellular location is the cell projection. It localises to the dendrite. It carries out the reaction L-tyrosyl-[protein] + ATP = O-phospho-L-tyrosyl-[protein] + ADP + H(+). Functionally, receptor tyrosine kinase which binds promiscuously transmembrane ephrin-B family ligands residing on adjacent cells, leading to contact-dependent bidirectional signaling into neighboring cells. The signaling pathway downstream of the receptor is referred to as forward signaling while the signaling pathway downstream of the ephrin ligand is referred to as reverse signaling. Generally has an overlapping and redundant function with EPHB2. Like EPHB2, functions in axon guidance during development. In addition to its role in axon guidance also plays an important redundant role with other ephrin-B receptors in development and maturation of dendritic spines and the formation of excitatory synapses. May control other aspects of development through regulation of cell migration and positioning. This Gallus gallus (Chicken) protein is Ephrin type-B receptor 3 (EPHB3).